The sequence spans 806 residues: Polyribonucleotide nucleotidyltransferase (806 aa).

Mg(2+)-binding residues include Asp-488 and Asp-494. A KH domain is found at 555–614 (PQIRTVQIPTDKIRDLIGPGGKTIRGIIEATQVKIDVDDTGRVNIASSDEEGLKKALAMI). Residues 624–691 (GKTYLGKVVR…EGNRIKLSRK (68 aa)) form the S1 motif domain. The segment at 698 to 806 (RQKLGLPEPG…QGGGGNRGPQ (109 aa)) is disordered. Residues 704 to 717 (PEPGAEAPAAAEGQ) show a composition bias toward low complexity. Over residues 738-757 (GGEDFDDFDEEGGEGEGEDE) the composition is skewed to acidic residues. Residues 758–774 (NFNREDTPNSAPGERRP) are compositionally biased toward basic and acidic residues. Residues 783–792 (RGRRRRRGRG) are compositionally biased toward basic residues. Residues 793–806 (RGPGQGGGGNRGPQ) show a composition bias toward gly residues.

This sequence belongs to the polyribonucleotide nucleotidyltransferase family. Mg(2+) is required as a cofactor.

The protein resides in the cytoplasm. It catalyses the reaction RNA(n+1) + phosphate = RNA(n) + a ribonucleoside 5'-diphosphate. In terms of biological role, involved in mRNA degradation. Catalyzes the phosphorolysis of single-stranded polyribonucleotides processively in the 3'- to 5'-direction. The polypeptide is Polyribonucleotide nucleotidyltransferase (Acidobacterium capsulatum (strain ATCC 51196 / DSM 11244 / BCRC 80197 / JCM 7670 / NBRC 15755 / NCIMB 13165 / 161)).